The sequence spans 601 residues: Elongation factor 4 (601 aa).

Residues 5-187 enclose the tr-type G domain; it reads ENIRNFCIIA…AIVHHLPAPK (183 aa). GTP is bound by residues 17-22 and 134-137; these read DHGKST and NKID.

The protein belongs to the TRAFAC class translation factor GTPase superfamily. Classic translation factor GTPase family. LepA subfamily.

Its subcellular location is the cell inner membrane. The enzyme catalyses GTP + H2O = GDP + phosphate + H(+). Required for accurate and efficient protein synthesis under certain stress conditions. May act as a fidelity factor of the translation reaction, by catalyzing a one-codon backward translocation of tRNAs on improperly translocated ribosomes. Back-translocation proceeds from a post-translocation (POST) complex to a pre-translocation (PRE) complex, thus giving elongation factor G a second chance to translocate the tRNAs correctly. Binds to ribosomes in a GTP-dependent manner. The protein is Elongation factor 4 of Desulfovibrio desulfuricans (strain ATCC 27774 / DSM 6949 / MB).